Reading from the N-terminus, the 199-residue chain is Peroxynitrite isomerase (199 aa).

The GXWXGXG motif lies at 20–26; that stretch reads GVWEGSG. Heme b-binding residues include K158 and H190.

It belongs to the nitrobindin family. As to quaternary structure, homodimer. Requires heme b as cofactor.

It carries out the reaction peroxynitrite = nitrate. It functions in the pathway nitrogen metabolism. Heme-binding protein able to scavenge peroxynitrite and to protect free L-tyrosine against peroxynitrite-mediated nitration, by acting as a peroxynitrite isomerase that converts peroxynitrite to nitrate. Therefore, this protein likely plays a role in peroxynitrite sensing and in the detoxification of reactive nitrogen and oxygen species (RNS and ROS, respectively). Is able to bind nitric oxide (NO) in vitro, but may act as a sensor of peroxynitrite levels in vivo. The protein is Peroxynitrite isomerase of Clavibacter sepedonicus (Clavibacter michiganensis subsp. sepedonicus).